The chain runs to 153 residues: 17.5 kDa class I heat shock protein (153 aa).

Residues E39–G153 form the sHSP domain.

The protein belongs to the small heat shock protein (HSP20) family. Forms oligomeric structures.

It is found in the cytoplasm. The sequence is that of 17.5 kDa class I heat shock protein (HSP17.5-M) from Glycine max (Soybean).